Here is a 340-residue protein sequence, read N- to C-terminus: GTPase Obg (340 aa).

The 159-residue stretch at 1-159 folds into the Obg domain; that stretch reads MGFIDEVKLC…KHVLLKLKVL (159 aa). An OBG-type G domain is found at 160 to 329; the sequence is SDVGIIGMPN…LSEKLKKSNS (170 aa). Residues 166–173, 191–195, 212–215, 279–282, and 310–312 each bind GTP; these read GMPNAGKS, FTTVR, DIPG, NKCD, and NGD. The Mg(2+) site is built by S173 and T193.

The protein belongs to the TRAFAC class OBG-HflX-like GTPase superfamily. OBG GTPase family. Monomer. Requires Mg(2+) as cofactor.

It localises to the cytoplasm. Functionally, an essential GTPase which binds GTP, GDP and possibly (p)ppGpp with moderate affinity, with high nucleotide exchange rates and a fairly low GTP hydrolysis rate. Plays a role in control of the cell cycle, stress response, ribosome biogenesis and in those bacteria that undergo differentiation, in morphogenesis control. This is GTPase Obg from Wolbachia sp. subsp. Drosophila simulans (strain wRi).